Here is a 222-residue protein sequence, read N- to C-terminus: Kunitz trypsin inhibitor 3 (222 aa).

A signal peptide spans 1 to 23 (MEKLTLSFITLTVLSAIFTAASA). The N-linked (GlcNAc...) asparagine glycan is linked to Asn65. Cystine bridges form between Cys72–Cys119 and Cys165–Cys173. N-linked (GlcNAc...) asparagine glycosylation occurs at Asn175.

This sequence belongs to the protease inhibitor I3 (leguminous Kunitz-type inhibitor) family.

In terms of biological role, exhibits Kunitz trypsin protease inhibitor activity. The protein is Kunitz trypsin inhibitor 3 of Arabidopsis thaliana (Mouse-ear cress).